Reading from the N-terminus, the 241-residue chain is MTDIKYKRVLMKLSGEALAGDKGQGIDLETVSAIAEELKDVHDLGTQIAIVVGGGNLWRGEPASKIGMERSRADYTGMLGTTMNALVLQDSLERAGVQTRVQTAITMQQIAEPYIRGRAIRHLEKGRIVIFAAGTGSPYFSTDTTAALRANEINADAILMGKNGVDGIYDSDPNKNANAVKFTELTHLDILQKGLKVMDSTASSLSMDNNMPLVVFNLNTPGNLKRVVLGEAIGTTVTGEK.

Residue 12–15 (KLSG) coordinates ATP. Residues 20-25 (GDKGQG) form an involved in allosteric activation by GTP region. Glycine 54 contacts UMP. 2 residues coordinate ATP: glycine 55 and arginine 59. UMP-binding positions include aspartate 74 and 135-142 (TGSPYFST). The ATP site is built by asparagine 163, tyrosine 169, and aspartate 172.

The protein belongs to the UMP kinase family. Homohexamer.

Its subcellular location is the cytoplasm. The catalysed reaction is UMP + ATP = UDP + ADP. It functions in the pathway pyrimidine metabolism; CTP biosynthesis via de novo pathway; UDP from UMP (UMPK route): step 1/1. With respect to regulation, allosterically activated by GTP. Inhibited by UTP. In terms of biological role, catalyzes the reversible phosphorylation of UMP to UDP. In Leuconostoc mesenteroides subsp. mesenteroides (strain ATCC 8293 / DSM 20343 / BCRC 11652 / CCM 1803 / JCM 6124 / NCDO 523 / NBRC 100496 / NCIMB 8023 / NCTC 12954 / NRRL B-1118 / 37Y), this protein is Uridylate kinase.